We begin with the raw amino-acid sequence, 282 residues long: Acetyl-coenzyme A carboxylase carboxyl transferase subunit beta (282 aa).

Positions 25–282 (LWTKCVSCGE…SSILTMLYRP (258 aa)) constitute a CoA carboxyltransferase N-terminal domain. Residues Cys29, Cys32, Cys48, and Cys51 each contribute to the Zn(2+) site. The C4-type zinc-finger motif lies at 29–51 (CVSCGETIYTKDIENNLNVCPKC).

Belongs to the AccD/PCCB family. As to quaternary structure, acetyl-CoA carboxylase is a heterohexamer composed of biotin carboxyl carrier protein (AccB), biotin carboxylase (AccC) and two subunits each of ACCase subunit alpha (AccA) and ACCase subunit beta (AccD). Zn(2+) serves as cofactor.

It localises to the cytoplasm. It catalyses the reaction N(6)-carboxybiotinyl-L-lysyl-[protein] + acetyl-CoA = N(6)-biotinyl-L-lysyl-[protein] + malonyl-CoA. Its pathway is lipid metabolism; malonyl-CoA biosynthesis; malonyl-CoA from acetyl-CoA: step 1/1. In terms of biological role, component of the acetyl coenzyme A carboxylase (ACC) complex. Biotin carboxylase (BC) catalyzes the carboxylation of biotin on its carrier protein (BCCP) and then the CO(2) group is transferred by the transcarboxylase to acetyl-CoA to form malonyl-CoA. This Citrifermentans bemidjiense (strain ATCC BAA-1014 / DSM 16622 / JCM 12645 / Bem) (Geobacter bemidjiensis) protein is Acetyl-coenzyme A carboxylase carboxyl transferase subunit beta.